A 505-amino-acid polypeptide reads, in one-letter code: DEAD-box ATP-dependent RNA helicase 38 (505 aa).

Residues 1 to 81 are disordered; that stretch reads MADGGKPPTP…DQGPPLLDDS (81 aa). Positions 27-44 are enriched in low complexity; the sequence is KAAAAAEAASSSSSNEPA. Residues 100 to 129 carry the Q motif motif; it reads AAFEDLKLTPELLKGLHDEMGFSRPSKIQA. Positions 134-310 constitute a Helicase ATP-binding domain; the sequence is MILTPPYKDL…TRVIKDGNQI (177 aa). An ATP-binding site is contributed by 147-154; sequence AHNGSGKT. A DEAD box motif is present at residues 254 to 257; sequence DEAD. In terms of domain architecture, Helicase C-terminal spans 338-493; the sequence is VIKDKIFEFG…EVRNWQSEED (156 aa).

The protein belongs to the DEAD box helicase family. DDX19/DBP5 subfamily.

It is found in the cytoplasm. The protein localises to the nucleus. It catalyses the reaction ATP + H2O = ADP + phosphate + H(+). Its function is as follows. ATP-dependent RNA helicase essential for mRNA export from the nucleus. Plays an important role in the positive regulation of CBF/DREB transcription factors. The chain is DEAD-box ATP-dependent RNA helicase 38 from Oryza sativa subsp. japonica (Rice).